Reading from the N-terminus, the 435-residue chain is Mitochondrial distribution and morphology protein 12 (435 aa).

The region spanning methionine 1–valine 435 is the SMP-LTD domain. 2 disordered regions span residues aspartate 73–histidine 113 and tryptophan 186–glutamate 268. Basic and acidic residues predominate over residues threonine 96–histidine 113. The span at serine 218 to serine 238 shows a compositional bias: low complexity. Positions histidine 251 to glutamate 268 are enriched in basic and acidic residues.

The protein belongs to the MDM12 family. In terms of assembly, component of the ER-mitochondria encounter structure (ERMES) or MDM complex, composed of mmm1, mdm10, mdm12 and mdm34. A mmm1 homodimer associates with one molecule of mdm12 on each side in a pairwise head-to-tail manner, and the SMP-LTD domains of mmm1 and mdm12 generate a continuous hydrophobic tunnel for phospholipid trafficking.

The protein localises to the mitochondrion outer membrane. The protein resides in the endoplasmic reticulum membrane. Functionally, component of the ERMES/MDM complex, which serves as a molecular tether to connect the endoplasmic reticulum (ER) and mitochondria. Components of this complex are involved in the control of mitochondrial shape and protein biogenesis, and function in nonvesicular lipid trafficking between the ER and mitochondria. Mdm12 is required for the interaction of the ER-resident membrane protein mmm1 and the outer mitochondrial membrane-resident beta-barrel protein mdm10. The mdm12-mmm1 subcomplex functions in the major beta-barrel assembly pathway that is responsible for biogenesis of all mitochondrial outer membrane beta-barrel proteins, and acts in a late step after the SAM complex. The mdm10-mdm12-mmm1 subcomplex further acts in the TOM40-specific pathway after the action of the mdm12-mmm1 complex. Essential for establishing and maintaining the structure of mitochondria and maintenance of mtDNA nucleoids. This Aspergillus niger (strain ATCC MYA-4892 / CBS 513.88 / FGSC A1513) protein is Mitochondrial distribution and morphology protein 12.